The chain runs to 94 residues: Pyrimidine/purine nucleoside phosphorylase (94 aa).

It belongs to the nucleoside phosphorylase PpnP family.

The catalysed reaction is a purine D-ribonucleoside + phosphate = a purine nucleobase + alpha-D-ribose 1-phosphate. It catalyses the reaction adenosine + phosphate = alpha-D-ribose 1-phosphate + adenine. The enzyme catalyses cytidine + phosphate = cytosine + alpha-D-ribose 1-phosphate. It carries out the reaction guanosine + phosphate = alpha-D-ribose 1-phosphate + guanine. The catalysed reaction is inosine + phosphate = alpha-D-ribose 1-phosphate + hypoxanthine. It catalyses the reaction thymidine + phosphate = 2-deoxy-alpha-D-ribose 1-phosphate + thymine. The enzyme catalyses uridine + phosphate = alpha-D-ribose 1-phosphate + uracil. It carries out the reaction xanthosine + phosphate = alpha-D-ribose 1-phosphate + xanthine. Catalyzes the phosphorolysis of diverse nucleosides, yielding D-ribose 1-phosphate and the respective free bases. Can use uridine, adenosine, guanosine, cytidine, thymidine, inosine and xanthosine as substrates. Also catalyzes the reverse reactions. This chain is Pyrimidine/purine nucleoside phosphorylase, found in Klebsiella pneumoniae (strain 342).